Reading from the N-terminus, the 364-residue chain is MKVLFAGGGTGGHLYPGVAMASELKKVVPGVEISFAGTPAGIEATEVPRLGYPLHLLPVRGLKRGRSLRDLAANVGVLKDFGSSLMQAFSIIRKETPNVVVGTGGYVSAPLLLAAQLSGCKTLIQEQNAFPGVTTRMLARMASEVHLSFAESRKFFGDSKNVFVTGNPAREFPAEPRQACLDFFGLRGDLPTLLVFGGSRGARAINNALLRFCGRLEGKINLIWQTGSLDAERVTAEVSSSSTRWIGPYIQEMGKAYGAADLVLCRAGASSLAELTNLGKPSVLAPYPYAAADHQRHNARALVNAGAAIMIEDTNLADDASLETILDLLGDSERLDRMGHASRSEGYPGAAAELAGRIIALSKS.

Residues T10–G12, N128, R170, S199, I250, and Q295 each bind UDP-N-acetyl-alpha-D-glucosamine.

The protein belongs to the glycosyltransferase 28 family. MurG subfamily.

It is found in the cell inner membrane. It catalyses the reaction di-trans,octa-cis-undecaprenyl diphospho-N-acetyl-alpha-D-muramoyl-L-alanyl-D-glutamyl-meso-2,6-diaminopimeloyl-D-alanyl-D-alanine + UDP-N-acetyl-alpha-D-glucosamine = di-trans,octa-cis-undecaprenyl diphospho-[N-acetyl-alpha-D-glucosaminyl-(1-&gt;4)]-N-acetyl-alpha-D-muramoyl-L-alanyl-D-glutamyl-meso-2,6-diaminopimeloyl-D-alanyl-D-alanine + UDP + H(+). The protein operates within cell wall biogenesis; peptidoglycan biosynthesis. Cell wall formation. Catalyzes the transfer of a GlcNAc subunit on undecaprenyl-pyrophosphoryl-MurNAc-pentapeptide (lipid intermediate I) to form undecaprenyl-pyrophosphoryl-MurNAc-(pentapeptide)GlcNAc (lipid intermediate II). The sequence is that of UDP-N-acetylglucosamine--N-acetylmuramyl-(pentapeptide) pyrophosphoryl-undecaprenol N-acetylglucosamine transferase from Chlorobaculum parvum (strain DSM 263 / NCIMB 8327) (Chlorobium vibrioforme subsp. thiosulfatophilum).